The chain runs to 210 residues: Large ribosomal subunit protein uL4 (210 aa).

Over residues 44 to 54 (KRQGTASTLTR) the composition is skewed to polar residues. Residues 44 to 94 (KRQGTASTLTRSEVRGGGRKPYKQKGTGRARQGSIRTPLRPGGGVIFGPKP) form a disordered region. Residues 60–71 (GGRKPYKQKGTG) are compositionally biased toward basic residues.

Belongs to the universal ribosomal protein uL4 family. As to quaternary structure, part of the 50S ribosomal subunit.

In terms of biological role, one of the primary rRNA binding proteins, this protein initially binds near the 5'-end of the 23S rRNA. It is important during the early stages of 50S assembly. It makes multiple contacts with different domains of the 23S rRNA in the assembled 50S subunit and ribosome. Forms part of the polypeptide exit tunnel. The polypeptide is Large ribosomal subunit protein uL4 (Prochlorococcus marinus subsp. pastoris (strain CCMP1986 / NIES-2087 / MED4)).